Here is a 452-residue protein sequence, read N- to C-terminus: Probable phosphoglucosamine mutase (452 aa).

Residue serine 101 is the Phosphoserine intermediate of the active site. Residues serine 101, aspartate 242, aspartate 244, and aspartate 246 each coordinate Mg(2+). The residue at position 101 (serine 101) is a Phosphoserine.

It belongs to the phosphohexose mutase family. Requires Mg(2+) as cofactor. Post-translationally, activated by phosphorylation.

The catalysed reaction is alpha-D-glucosamine 1-phosphate = D-glucosamine 6-phosphate. In terms of biological role, catalyzes the conversion of glucosamine-6-phosphate to glucosamine-1-phosphate. The protein is Probable phosphoglucosamine mutase of Methanosphaera stadtmanae (strain ATCC 43021 / DSM 3091 / JCM 11832 / MCB-3).